We begin with the raw amino-acid sequence, 587 residues long: 5-aminolevulinate synthase, erythroid-specific, mitochondrial (587 aa).

The transit peptide at 1–49 (MVTAAMLLQCCPVLARGPTSLLGKVVKTHQFLFGIGRCPILATQGPNCS) directs the protein to the mitochondrion. Succinyl-CoA is bound at residue arginine 163. Residues cysteine 258 and phenylalanine 259 each contribute to the pyridoxal 5'-phosphate site. Succinyl-CoA-binding residues include serine 280 and lysine 299. Pyridoxal 5'-phosphate contacts are provided by serine 332, histidine 360, and threonine 388. Residue lysine 391 is part of the active site. N6-(pyridoxal phosphate)lysine is present on lysine 391. Residues threonine 420 and threonine 421 each coordinate pyridoxal 5'-phosphate. Threonine 508 provides a ligand contact to succinyl-CoA.

The protein belongs to the class-II pyridoxal-phosphate-dependent aminotransferase family. Homodimer. Interacts with SUCLA2. As to quaternary structure, interacts with SUCLA2. The cofactor is pyridoxal 5'-phosphate. In terms of tissue distribution, erythroid-specific.

It is found in the mitochondrion inner membrane. The catalysed reaction is succinyl-CoA + glycine + H(+) = 5-aminolevulinate + CO2 + CoA. It participates in porphyrin-containing compound metabolism; protoporphyrin-IX biosynthesis; 5-aminolevulinate from glycine: step 1/1. Its activity is regulated as follows. Down-regulated by itaconyl-CoA which acts as a competitive inhibitor of succinyl-CoA substrate. Its function is as follows. Catalyzes the pyridoxal 5'-phosphate (PLP)-dependent condensation of succinyl-CoA and glycine to form aminolevulinic acid (ALA), with CoA and CO2 as by-products. Contributes significantly to heme formation during erythropoiesis. Functionally, catalyzes the pyridoxal 5'-phosphate (PLP)-dependent condensation of succinyl-CoA and glycine to form aminolevulinic acid (ALA), with CoA and CO2 as by-products. Catalytic activity is 75-85% of isoform 1 activity. In terms of biological role, catalyzes the pyridoxal 5'-phosphate (PLP)-dependent condensation of succinyl-CoA and glycine to form aminolevulinic acid (ALA), with CoA and CO2 as by-products. Catalytic activity is 65-75% of isoform 1 activity. This Homo sapiens (Human) protein is 5-aminolevulinate synthase, erythroid-specific, mitochondrial.